The chain runs to 54 residues: U-reduvitoxin-Pr7a (54 aa).

Residues 1–23 (MDFLRILLFVLACIMALFTSAIA) form the signal peptide. 3 cysteine pairs are disulfide-bonded: Cys-26–Cys-41, Cys-33–Cys-46, and Cys-40–Cys-53.

It belongs to the venom Ptu1-like knottin family. As to expression, expressed by the venom gland.

The protein resides in the secreted. In terms of biological role, binds reversibly and blocks P/Q-type voltage-gated calcium channels (Cav). This chain is U-reduvitoxin-Pr7a, found in Platymeris rhadamanthus (Red spot assassin bug).